Reading from the N-terminus, the 564-residue chain is Formate--tetrahydrofolate ligase (564 aa).

65-72 (TPLGEGKT) provides a ligand contact to ATP.

This sequence belongs to the formate--tetrahydrofolate ligase family.

It catalyses the reaction (6S)-5,6,7,8-tetrahydrofolate + formate + ATP = (6R)-10-formyltetrahydrofolate + ADP + phosphate. It participates in one-carbon metabolism; tetrahydrofolate interconversion. This Roseiflexus castenholzii (strain DSM 13941 / HLO8) protein is Formate--tetrahydrofolate ligase.